The following is a 134-amino-acid chain: ATP synthase epsilon chain (134 aa).

Belongs to the ATPase epsilon chain family. F-type ATPases have 2 components, CF(1) - the catalytic core - and CF(0) - the membrane proton channel. CF(1) has five subunits: alpha(3), beta(3), gamma(1), delta(1), epsilon(1). CF(0) has three main subunits: a, b and c.

It localises to the cell membrane. In terms of biological role, produces ATP from ADP in the presence of a proton gradient across the membrane. The polypeptide is ATP synthase epsilon chain (Carboxydothermus hydrogenoformans (strain ATCC BAA-161 / DSM 6008 / Z-2901)).